The primary structure comprises 251 residues: uncharacterized protein (251 aa).

The signal sequence occupies residues 1–25 (MRKKKFLSRFSFSSLFLLCGTLLSA). The N-palmitoyl cysteine moiety is linked to residue cysteine 26. Cysteine 26 is lipidated: S-diacylglycerol cysteine.

It belongs to the MG439/MG440 family.

It localises to the cell membrane. This is an uncharacterized protein from Mycoplasma pneumoniae (strain ATCC 29342 / M129 / Subtype 1) (Mycoplasmoides pneumoniae).